Consider the following 262-residue polypeptide: Hydroxyethylthiazole kinase (262 aa).

Met-50 lines the substrate pocket. ATP contacts are provided by Arg-125 and Thr-171. Position 198 (Gly-198) interacts with substrate.

Belongs to the Thz kinase family. It depends on Mg(2+) as a cofactor.

The catalysed reaction is 5-(2-hydroxyethyl)-4-methylthiazole + ATP = 4-methyl-5-(2-phosphooxyethyl)-thiazole + ADP + H(+). It participates in cofactor biosynthesis; thiamine diphosphate biosynthesis; 4-methyl-5-(2-phosphoethyl)-thiazole from 5-(2-hydroxyethyl)-4-methylthiazole: step 1/1. Functionally, catalyzes the phosphorylation of the hydroxyl group of 4-methyl-5-beta-hydroxyethylthiazole (THZ). The protein is Hydroxyethylthiazole kinase of Shigella flexneri serotype 5b (strain 8401).